The sequence spans 159 residues: MQKRAIYPGTFDPITNGHLDIVTRATQMFDHVILAIAASPSKKPMFTLDERVALAQKATAHLGNVEVVGFSDLMANFARDRQANILIRGLRAVADFEYEMQLAHMNRHLMPQLESVFLMPSKEWSFISSSLVKEVARHQGDVTHFLPDNVHQALMDKLK.

A substrate-binding site is contributed by Thr10. ATP-binding positions include 10–11 and His18; that span reads TF. 3 residues coordinate substrate: Lys42, Met74, and Arg88. ATP-binding positions include 89–91, Glu99, and 124–130; these read GLR and WSFISSS.

Belongs to the bacterial CoaD family. Homohexamer. Mg(2+) is required as a cofactor.

Its subcellular location is the cytoplasm. It catalyses the reaction (R)-4'-phosphopantetheine + ATP + H(+) = 3'-dephospho-CoA + diphosphate. It functions in the pathway cofactor biosynthesis; coenzyme A biosynthesis; CoA from (R)-pantothenate: step 4/5. Its function is as follows. Reversibly transfers an adenylyl group from ATP to 4'-phosphopantetheine, yielding dephospho-CoA (dPCoA) and pyrophosphate. In Salmonella typhimurium (strain LT2 / SGSC1412 / ATCC 700720), this protein is Phosphopantetheine adenylyltransferase.